Here is a 3414-residue protein sequence, read N- to C-terminus: Hemocyanin 1 (3414 aa).

A signal peptide spans 1–16 (MLSVRLLIVVLALANA). Residue Glu-17 participates in a divalent metal cation binding. The segment at 17-437 (ENLVRKSVEH…PPVKHHQSAN (421 aa)) is functional unit a (wall). His-58 lines the Cu cation pocket. Cys-64 and Cys-73 are disulfide-bonded. The 2'-(S-cysteinyl)-histidine (Cys-His) cross-link spans 74-76 (CIH). Cu cation contacts are provided by His-76, His-85, His-195, His-199, and His-226. Cys-185 and Cys-252 are disulfide-bonded. Residues 287–290 (CELH) constitute a cross-link (2'-(S-cysteinyl)-histidine (Cys-His)). An intrachain disulfide couples Cys-339 to Cys-351. Asn-403 is a glycosylation site (N-linked (GlcNAc...) asparagine). The tract at residues 438–851 (LLVRKNINDL…RVKFDKVPRS (414 aa)) is functional unit b (wall). His-478 is a Cu cation binding site. Cysteines 484 and 495 form a disulfide. A cross-link (2'-(S-cysteinyl)-histidine (Cys-His)) is located at residues 496 to 498 (CVH). Cu cation-binding residues include His-498 and His-507. The N-linked (GlcNAc...) asparagine glycan is linked to Asn-545. Cys-608 and Cys-674 are disulfide-bonded. Cu cation is bound by residues His-618, His-622, and His-649. Residues 628–669 (SEHFSMSSLHYTAFDPLFYFHHSNVDRLWAVWQALQMRRHKP) form a WD 1 repeat. Residue Glu-737 coordinates a divalent metal cation. A functional unit c (wall) region spans residues 852-1271 (RLIRKNVDRL…EVYQAEVTSA (420 aa)). His-892 provides a ligand contact to Cu cation. A disulfide bond links Cys-898 and Cys-909. The 2'-(S-cysteinyl)-histidine (Cys-His) cross-link spans 910–912 (CVH). Cu cation contacts are provided by His-912, His-921, His-1031, His-1035, and His-1062. 2 disulfide bridges follow: Cys-1021–Cys-1088 and Cys-1178–Cys-1184. One copy of the WD 2 repeat lies at 1041 to 1082 (AQPYGMASLRYTAFDPLFYLHHSNTDRIWAIWQALQKYRGKP). The tract at residues 1272 to 1680 (NRIRKNIENL…AHTDDGHTEP (409 aa)) is functional unit d (wall). His-1309 lines the Cu cation pocket. An intrachain disulfide couples Cys-1315 to Cys-1324. Residues 1325–1327 (CVH) constitute a cross-link (2'-(S-cysteinyl)-histidine (Cys-His)). Cu cation-binding residues include His-1327, His-1336, His-1440, His-1444, and His-1471. 2 cysteine pairs are disulfide-bonded: Cys-1430/Cys-1497 and Cys-1585/Cys-1595. The WD 3 repeat unit spans residues 1450 to 1491 (KGKYSMSNLDYAAFDPVFFLHHATTDRIWAIWQDLQRFRKRP). An N-linked (GlcNAc...) asparagine glycan is attached at Asn-1648. Residues 1681-2097 (VMIRKDITQL…HDISSHHLSL (417 aa)) are functional unit e (wall). Cu cation is bound at residue His-1721. A disulfide bond links Cys-1727 and Cys-1738. The segment at residues 1739–1741 (CVH) is a cross-link (2'-(S-cysteinyl)-histidine (Cys-His)). 5 residues coordinate Cu cation: His-1741, His-1750, His-1863, His-1867, and His-1894. Cystine bridges form between Cys-1853-Cys-1920 and Cys-2009-Cys-2015. The stretch at 1873–1914 (KEPYGIGHLHYASYDPLFYIHHSQTDRIWAIWQSLQRFRGLS) is one WD 4 repeat. Residues 2098-2517 (NKVRHDLSTL…EDHHSSSMAG (420 aa)) are functional unit f (wall). Residue His-2138 coordinates Cu cation. Cys-2144 and Cys-2154 are disulfide-bonded. N-linked (GlcNAc...) asparagine glycosylation is present at Asn-2145. The 2'-(S-cysteinyl)-histidine (Cys-His) cross-link spans 2155 to 2157 (CIH). Residues His-2157, His-2166, His-2276, His-2280, and His-2307 each coordinate Cu cation. A WD 5 repeat occupies 2163–2199 (PHWHRLYTLQFEQALRRHGSSVAVPYWDWTKPIHNIP). 2 cysteine pairs are disulfide-bonded: Cys-2266–Cys-2333 and Cys-2420–Cys-2426. An a divalent metal cation-binding site is contributed by Glu-2424. Residues 2518–2921 (HGVRKEINTL…EKHHEDHHED (404 aa)) form a functional unit g (internal arc) region. His-2558 is a Cu cation binding site. The cysteines at positions 2564 and 2574 are disulfide-linked. Asn-2571 is a glycosylation site (N-linked (GlcNAc...) asparagine). A cross-link (2'-(S-cysteinyl)-histidine (Cys-His)) is located at residues 2575-2577 (CTH). 5 residues coordinate Cu cation: His-2577, His-2586, His-2686, His-2690, and His-2717. 2 disulfides stabilise this stretch: Cys-2676–Cys-2743 and Cys-2830–Cys-2836. A WD 6 repeat occupies 2696-2737 (LTPYGMSTLEYTTYDPLFWLHHANTDRIWAIWQALQEYRGLP). The interval 2922-3414 (ILVRKNIHSL…LRIHVHVDDE (493 aa)) is functional unit h (internal slab). His-2962 provides a ligand contact to Cu cation. Cys-2968 and Cys-2978 are joined by a disulfide. The 2'-(S-cysteinyl)-histidine (Cys-His) cross-link spans 2979–2981 (CVH). Cu cation-binding residues include His-2981, His-2990, His-3091, His-3095, and His-3122. A disulfide bridge links Cys-3081 with Cys-3148. The stretch at 3101 to 3142 (AEKYSMSTLEYSAFDPYFMIHHASLDKIWIIWQELQKRRVKP) is one WD 7 repeat. An N-linked (GlcNAc...) asparagine glycan is attached at Asn-3278. An intrachain disulfide couples Cys-3367 to Cys-3400.

This sequence belongs to the tyrosinase family. Hemocyanin subfamily. As to quaternary structure, homo-didecamer, with two decamers assembled face-to-face at their open ends. This didecamer form a stable 25 nM cylinder wall. Probably N-glycosylated. Asn-1280 and Asn-2484 are buried deeply in the protein which make them inaccessible for sugar attachment. Asn-3278 N-glycan is likely to represent a diantennate carbohydrate tree. The didecamer is almost evenly tagged by a total of 120 sugar trees. In terms of tissue distribution, hemolymph.

It is found in the secreted. The protein localises to the extracellular space. Functionally, hemocyanins are copper-containing oxygen carriers occurring freely dissolved in the hemolymph of many mollusks and arthropods. In Megathura crenulata (Giant keyhole limpet), this protein is Hemocyanin 1.